Reading from the N-terminus, the 795-residue chain is Delta-1-pyrroline-5-carboxylate synthase (795 aa).

Residues Met1–Pro361 form a glutamate 5-kinase region. Substrate is bound by residues Ser117, Asp223, and Asn246. Residues Ser266–Asp267 and Met305–Lys311 contribute to the ATP site. N6-succinyllysine is present on residues Lys311, Lys347, and Lys550. Residues Thr362–Asn795 are gamma-glutamyl phosphate reductase.

The protein in the N-terminal section; belongs to the glutamate 5-kinase family. In the C-terminal section; belongs to the gamma-glutamyl phosphate reductase family. Can form homodimers/multimers.

It localises to the mitochondrion matrix. It catalyses the reaction L-glutamate + ATP = L-glutamyl 5-phosphate + ADP. The enzyme catalyses L-glutamate 5-semialdehyde + phosphate + NADP(+) = L-glutamyl 5-phosphate + NADPH + H(+). Its pathway is amino-acid biosynthesis; L-proline biosynthesis; L-glutamate 5-semialdehyde from L-glutamate: step 1/2. It functions in the pathway amino-acid biosynthesis; L-proline biosynthesis; L-glutamate 5-semialdehyde from L-glutamate: step 2/2. In terms of biological role, bifunctional enzyme that converts glutamate to glutamate 5-semialdehyde, an intermediate in the biosynthesis of proline, ornithine and arginine. The chain is Delta-1-pyrroline-5-carboxylate synthase (ALDH18A1) from Pongo abelii (Sumatran orangutan).